Here is a 664-residue protein sequence, read N- to C-terminus: NAD(P)H-quinone oxidoreductase chain 5 (664 aa).

Helical transmembrane passes span 7-27 (YAWL…IGLI), 39-59 (LNAV…FGLL), 91-111 (HLSA…MIYT), 120-140 (GYVR…GLVF), 144-164 (LVQV…LIGF), 187-207 (FGLL…EFDL), 219-239 (GQIS…GPVA), 258-278 (TPIS…FLVA), 290-310 (AMNV…TIAL), 327-347 (LGYM…FHLM), 352-372 (FKAM…EVVG), 395-415 (ATTF…AGFW), 420-440 (ILGL…ATAG), 495-515 (FPLM…VPWG), 541-561 (FLIM…IASL), and 643-663 (VQFY…FFSV).

Belongs to the complex I subunit 5 family.

It localises to the cell membrane. It carries out the reaction a plastoquinone + NADH + (n+1) H(+)(in) = a plastoquinol + NAD(+) + n H(+)(out). The catalysed reaction is a plastoquinone + NADPH + (n+1) H(+)(in) = a plastoquinol + NADP(+) + n H(+)(out). Functionally, NDH-1 shuttles electrons from NAD(P)H, via FMN and iron-sulfur (Fe-S) centers, to quinones in the respiratory chain. The immediate electron acceptor for the enzyme in this species is believed to be plastoquinone. Couples the redox reaction to proton translocation (for every two electrons transferred, four hydrogen ions are translocated across the cytoplasmic membrane), and thus conserves the redox energy in a proton gradient. This chain is NAD(P)H-quinone oxidoreductase chain 5 (ndhF), found in Picosynechococcus sp. (strain ATCC 27264 / PCC 7002 / PR-6) (Agmenellum quadruplicatum).